The chain runs to 243 residues: Probable transcriptional regulatory protein BH0025 (243 aa).

The protein belongs to the TACO1 family.

It localises to the cytoplasm. The sequence is that of Probable transcriptional regulatory protein BH0025 from Borrelia hermsii (strain HS1 / DAH).